The chain runs to 302 residues: MDQQRLTHLKQLEAESIHIIREVAAEFDNPVMMYSIGKDSSVMLHLARKAFYPGKIPFPLLHVDTDWKFREMIEFRDRTAEKYGFELLVHKNPEGIAMGCSPFVHGSSKHTDIMKTQGLKQALNKYGFDAAFGGARRDEEKSRAKERVYSFRDKNHTWDPKNQRPELWKTYNGQVNKGESIRVFPLSNWTELDIWQYIYLENIEIVPLYLADKRPVVERDGMLIMVDDDRMELQPGEVIEEKSVRFRTLGCYPLTGAIESEANTLTGIIEEMLVATSSERQGRAIDHDQSGSMELKKRQGYF.

Residues 280-302 (RQGRAIDHDQSGSMELKKRQGYF) are disordered.

Belongs to the PAPS reductase family. CysD subfamily. As to quaternary structure, heterodimer composed of CysD, the smaller subunit, and CysN.

It carries out the reaction sulfate + ATP + H(+) = adenosine 5'-phosphosulfate + diphosphate. The protein operates within sulfur metabolism; hydrogen sulfide biosynthesis; sulfite from sulfate: step 1/3. With CysN forms the ATP sulfurylase (ATPS) that catalyzes the adenylation of sulfate producing adenosine 5'-phosphosulfate (APS) and diphosphate, the first enzymatic step in sulfur assimilation pathway. APS synthesis involves the formation of a high-energy phosphoric-sulfuric acid anhydride bond driven by GTP hydrolysis by CysN coupled to ATP hydrolysis by CysD. The polypeptide is Sulfate adenylyltransferase subunit 2 (Vibrio parahaemolyticus serotype O3:K6 (strain RIMD 2210633)).